The following is a 529-amino-acid chain: 2-(3-amino-3-carboxypropyl)histidine synthase subunit 2-2 (529 aa).

Residues C130, C151, and C366 each contribute to the [4Fe-4S] cluster site.

Belongs to the DPH1/DPH2 family. DPH2 subfamily. In terms of assembly, component of the 2-(3-amino-3-carboxypropyl)histidine synthase complex composed of DPH1, DPH2, DPH3 and a NADH-dependent reductase, predominantly CBR1. [4Fe-4S] cluster is required as a cofactor.

Its subcellular location is the cytoplasm. Its pathway is protein modification; peptidyl-diphthamide biosynthesis. In terms of biological role, required for the first step of diphthamide biosynthesis, a post-translational modification of histidine which occurs in elongation factor 2. DPH1 and DPH2 transfer a 3-amino-3-carboxypropyl (ACP) group from S-adenosyl-L-methionine (SAM) to a histidine residue, the reaction is assisted by a reduction system comprising DPH3 and a NADH-dependent reductase, predominantly CBR1. Facilitates the reduction of the catalytic iron-sulfur cluster found in the DPH1 subunit. This chain is 2-(3-amino-3-carboxypropyl)histidine synthase subunit 2-2, found in Candida albicans (strain SC5314 / ATCC MYA-2876) (Yeast).